Here is an 88-residue protein sequence, read N- to C-terminus: Small ribosomal subunit protein bS20 (88 aa).

It belongs to the bacterial ribosomal protein bS20 family.

Functionally, binds directly to 16S ribosomal RNA. This Clostridium novyi (strain NT) protein is Small ribosomal subunit protein bS20.